Reading from the N-terminus, the 245-residue chain is tRNA (guanine-N(1)-)-methyltransferase (245 aa).

S-adenosyl-L-methionine-binding positions include glycine 112 and 132 to 137 (IGDFVL).

This sequence belongs to the RNA methyltransferase TrmD family. In terms of assembly, homodimer.

It localises to the cytoplasm. The catalysed reaction is guanosine(37) in tRNA + S-adenosyl-L-methionine = N(1)-methylguanosine(37) in tRNA + S-adenosyl-L-homocysteine + H(+). Its function is as follows. Specifically methylates guanosine-37 in various tRNAs. This is tRNA (guanine-N(1)-)-methyltransferase from Geobacter metallireducens (strain ATCC 53774 / DSM 7210 / GS-15).